Here is a 490-residue protein sequence, read N- to C-terminus: GTPase Der (490 aa).

In terms of domain architecture, EngA-type G 1 spans 3–166 (PVIALVGRPN…IALSEFPKDD (164 aa)). GTP contacts are provided by residues 9 to 16 (GRPNVGKS), 56 to 60 (DTGGI), and 118 to 121 (NKVD). The segment at 164 to 191 (KDDADEPEEGEEEIVAEGEEAKRIPGPS) is disordered. The span at 166 to 181 (DADEPEEGEEEIVAEG) shows a compositional bias: acidic residues. Residues 182–191 (EEAKRIPGPS) are compositionally biased toward basic and acidic residues. The EngA-type G 2 domain occupies 196-369 (IKIAIIGRPN…SVQNSFKSAV (174 aa)). GTP contacts are provided by residues 202 to 209 (GRPNVGKS), 249 to 253 (DTAGV), and 314 to 317 (NKWD). Residues 370–454 (TRWPTSRLTQ…PIRIEFKGGE (85 aa)) enclose the KH-like domain. The tract at residues 452-490 (GGENPYEGNKNTLTDRQVNKKRRLMSHHKKADKKRRDKR) is disordered. Positions 470–490 (NKKRRLMSHHKKADKKRRDKR) are enriched in basic residues.

Belongs to the TRAFAC class TrmE-Era-EngA-EngB-Septin-like GTPase superfamily. EngA (Der) GTPase family. In terms of assembly, associates with the 50S ribosomal subunit.

In terms of biological role, GTPase that plays an essential role in the late steps of ribosome biogenesis. In Pseudomonas fluorescens (strain ATCC BAA-477 / NRRL B-23932 / Pf-5), this protein is GTPase Der.